The following is a 296-amino-acid chain: 33 kDa chaperonin (296 aa).

2 disulfide bridges follow: Cys-233/Cys-235 and Cys-267/Cys-270.

This sequence belongs to the HSP33 family. Under oxidizing conditions two disulfide bonds are formed involving the reactive cysteines. Under reducing conditions zinc is bound to the reactive cysteines and the protein is inactive.

The protein localises to the cytoplasm. Its function is as follows. Redox regulated molecular chaperone. Protects both thermally unfolding and oxidatively damaged proteins from irreversible aggregation. Plays an important role in the bacterial defense system toward oxidative stress. The polypeptide is 33 kDa chaperonin (Actinobacillus pleuropneumoniae serotype 3 (strain JL03)).